We begin with the raw amino-acid sequence, 478 residues long: MTRIKINARRIFSLLIPFFFFTSVHAEQTAAPAKTVTVEAKNETFAPQHPDQYLSWKATSEQSERVDALAEDPRLVILWAGYPFSRDYNKPRGHAFAVTDVRETLRTGAPKNAEDGPLPMACWSCKSPDVARLIQKDGEDGYFHGKWARGGPEIVNNLGCADCHNTASPEFAKGKPELTLSRPYAARAMEAIGKPFEKAGRFDQQSMVCGQCHVEYYFDGKNKAVKFPWDDGMKVENMEQYYDKIAFSDWTNSLSKTPMLKAQHPEYETWTAGIHGKNNVTCIDCHMPKVQNAEGKLYTDHKIGNPFDNFAQTCANCHTQDKAALQKVVAERKQSINDLKIKVEDQLVHAHFEAKAALDAGATEAEMKPIQDDIRHAQWRWDLAIASHGIHMHAPEEGLRMLGTAMDKAADARTKLARLLATKGITHEIEIPDISTKEKAQQAIGLNMEQIKAEKQDFIKTVIPQWEEQARKNGLLSQ.

An N-terminal signal peptide occupies residues Met1–Ala26. His94 serves as a coordination point for heme c. The heme site is built by Cys122, Cys125, and Lys126. Residues Cys160, Cys163, His164, Cys209, Cys212, and His213 each contribute to the heme c site. Ca(2+) contacts are provided by Glu215, Tyr216, Lys261, and Gln263. Substrate is bound at residue Tyr216. A substrate-binding site is contributed by His264. The heme c site is built by His275, Cys282, Cys285, His286, His301, Cys314, Cys317, His318, and His393.

It belongs to the cytochrome c-552 family. Ca(2+) is required as a cofactor. Heme c serves as cofactor.

The protein resides in the periplasm. The enzyme catalyses 6 Fe(III)-[cytochrome c] + NH4(+) + 2 H2O = 6 Fe(II)-[cytochrome c] + nitrite + 8 H(+). It functions in the pathway nitrogen metabolism; nitrate reduction (assimilation). Its function is as follows. Catalyzes the reduction of nitrite to ammonia, consuming six electrons in the process. The chain is Cytochrome c-552 from Escherichia coli O9:H4 (strain HS).